Reading from the N-terminus, the 657-residue chain is SAGA complex subunit SGF73 (657 aa).

Residues cysteine 78, cysteine 81, histidine 93, and cysteine 98 each coordinate Zn(2+). Disordered stretches follow at residues 98 to 225 (CAGA…TEKH), 287 to 353 (EKRA…VNLT), 469 to 532 (QQQQ…SQDT), and 572 to 636 (ESNQ…NVSG). The span at 107-118 (TDPRDESTRETI) shows a compositional bias: basic and acidic residues. The span at 131–163 (DDDNSNDNNNDDDDDDDNDDNEDDDDADDDDDN) shows a compositional bias: acidic residues. Composition is skewed to polar residues over residues 174-193 (SSFNPLKRSTSMESANTPNM) and 200-210 (TGTPQTFSSSI). In terms of domain architecture, SCA7 spans 220–286 (NPTEKHLIDF…EHQTKIGAAA (67 aa)). Residues 306-321 (QKKHTQQQKQGQRSKQ) show a composition bias toward basic residues. Composition is skewed to low complexity over residues 325-336 (NGGKSAKNGGKS) and 469-493 (QQQQQQQQHHSPQAQAQASTQQPTQ). A compositionally biased stretch (polar residues) spans 504-516 (ATNSSFNANVSSK). Positions 517–526 (QIQQQQQQQQ) are enriched in low complexity. A compositionally biased stretch (polar residues) spans 572–583 (ESNQDSHLSGTH). Residues 584-594 (NNNSSKNGNNN) are compositionally biased toward low complexity. Over residues 600-636 (ASISSPNTSVNSIQSPPSVNSVNGSGQGVSTGINVSG) the composition is skewed to polar residues.

Belongs to the ataxin-7 family. Component of the 1.8 MDa SAGA (Spt-Ada-Gcn5 acetyltransferase) complex, which is composed of 19 subunits TRA1, SPT7, TAF5, NGG1/ADA3, SGF73, SPT20/ADA5, SPT8, TAF12, TAF6, HFI1/ADA1, UBP8, GCN5, ADA2, SPT3, SGF29, TAF10, TAF9, SGF11 and SUS1. The SAGA complex is composed of 4 modules, namely the HAT (histone acetyltransferase) module (GCN5, ADA2, NGG1/ADA3 and SGF29), the DUB (deubiquitinating) module (UBP8, SGF11, SGF73 and SUS1), the core or TAF (TBP-associated factor) module (TAF5, TAF6, TAF9, TAF10 and TAF12), and the Tra1 or SPT (Suppressor of Ty) module (TRA1, HFI1/ADA1, SPT3, SPT7, SPT8 and SPT20/ADA5). The Tra1/SPT module binds activators, the core module recruits TBP (TATA-binding protein), the HAT module contains the histone H3 acetyltransferase GCN5, and the DUB module comprises the histone H2B deubiquitinase UBP8. Also identified in an altered form of SAGA, named SALSA (SAGA altered, Spt8 absent) or SLIK (SAGA-like) complex, which contains a C-terminal truncated form of SPT7 and is missing SPT8. However, it has been shown that the SAGA and SAGA-like SALSA/SLIK transcriptional coactivators are structurally and biochemically equivalent.

The protein resides in the nucleus. Its subcellular location is the cytoplasm. Component of the transcription coactivator SAGA complex. SAGA acts as a general cofactor required for essentially all RNA polymerase II transcription. At the promoters, SAGA is required for transcription pre-initiation complex (PIC) recruitment. It influences RNA polymerase II transcriptional activity through different activities such as TBP interaction (via core/TAF module) and promoter selectivity, interaction with transcription activators (via Tra1/SPT module), and chromatin modification through histone acetylation (via HAT module) and deubiquitination (via DUB module). SAGA preferentially acetylates histones H3 (to form H3K9ac, H3K14ac, H3K18ac and H3K23ac) and H2B and deubiquitinates histone H2B. SAGA interacts with DNA via upstream activating sequences (UASs). Also identified in a modified version of SAGA named SALSA or SLIK. The cleavage of SPT7 and the absence of the SPT8 subunit in SLIK neither drive any major conformational differences in its structure compared with SAGA, nor significantly affect HAT, DUB, or DNA-binding activities. SGF73 tethers the DUB module to the rest of the SAGA complex through its central domain and activates the ubiquitin hydrolase UBP8 by maintaining its catalytic domain in an active conformation. SGF73 mediates recruitment of the TREX-2 mRNA export factors SAC3 and THP1 to SAGA, which is crucial to target TREX-2 to the nuclear pore complex (NPC) necessary for export of mRNA. Upon environmental stress, involved in the bypass of the canonical mRNA export process for the immediate export of stress-related transcripts to maintain proteostasis. This Saccharomyces cerevisiae (strain ATCC 204508 / S288c) (Baker's yeast) protein is SAGA complex subunit SGF73 (SGF73).